The sequence spans 273 residues: 4-hydroxy-tetrahydrodipicolinate reductase (273 aa).

NAD(+)-binding positions include glycine 12–methionine 17 and glutamate 38. Arginine 39 is an NADP(+) binding site. Residues glycine 102–threonine 104 and alanine 126–phenylalanine 129 contribute to the NAD(+) site. Histidine 159 functions as the Proton donor/acceptor in the catalytic mechanism. Histidine 160 is a binding site for (S)-2,3,4,5-tetrahydrodipicolinate. The active-site Proton donor is lysine 163. (S)-2,3,4,5-tetrahydrodipicolinate is bound at residue glycine 169 to threonine 170.

The protein belongs to the DapB family. As to quaternary structure, homotetramer.

It is found in the cytoplasm. The enzyme catalyses (S)-2,3,4,5-tetrahydrodipicolinate + NAD(+) + H2O = (2S,4S)-4-hydroxy-2,3,4,5-tetrahydrodipicolinate + NADH + H(+). It carries out the reaction (S)-2,3,4,5-tetrahydrodipicolinate + NADP(+) + H2O = (2S,4S)-4-hydroxy-2,3,4,5-tetrahydrodipicolinate + NADPH + H(+). It functions in the pathway amino-acid biosynthesis; L-lysine biosynthesis via DAP pathway; (S)-tetrahydrodipicolinate from L-aspartate: step 4/4. Catalyzes the conversion of 4-hydroxy-tetrahydrodipicolinate (HTPA) to tetrahydrodipicolinate. The chain is 4-hydroxy-tetrahydrodipicolinate reductase from Salmonella paratyphi A (strain ATCC 9150 / SARB42).